The sequence spans 261 residues: Precorrin-6A reductase (261 aa).

It belongs to the precorrin-6x reductase family.

The catalysed reaction is precorrin-6B + NADP(+) = precorrin-6A + NADPH + 2 H(+). Its pathway is cofactor biosynthesis; adenosylcobalamin biosynthesis; cob(II)yrinate a,c-diamide from precorrin-2 (aerobic route): step 6/10. Catalyzes the reduction of the macrocycle of precorrin-6X into precorrin-6Y. This Sinorhizobium sp protein is Precorrin-6A reductase (cobK).